Consider the following 339-residue polypeptide: Ketol-acid reductoisomerase (NADP(+)) (339 aa).

In terms of domain architecture, KARI N-terminal Rossmann spans 1-182 (MRVYYDRDAD…GGGRAGIIET (182 aa)). NADP(+) is bound by residues 24-27 (YGSQ), R48, S51, T53, and 83-86 (DELQ). The active site involves H108. Residue G134 participates in NADP(+) binding. The KARI C-terminal knotted domain occupies 183 to 328 (TFREECETDL…ARLREMMPWI (146 aa)). Positions 191, 195, 227, and 231 each coordinate Mg(2+). S252 provides a ligand contact to substrate.

This sequence belongs to the ketol-acid reductoisomerase family. Requires Mg(2+) as cofactor.

It carries out the reaction (2R)-2,3-dihydroxy-3-methylbutanoate + NADP(+) = (2S)-2-acetolactate + NADPH + H(+). It catalyses the reaction (2R,3R)-2,3-dihydroxy-3-methylpentanoate + NADP(+) = (S)-2-ethyl-2-hydroxy-3-oxobutanoate + NADPH + H(+). Its pathway is amino-acid biosynthesis; L-isoleucine biosynthesis; L-isoleucine from 2-oxobutanoate: step 2/4. It participates in amino-acid biosynthesis; L-valine biosynthesis; L-valine from pyruvate: step 2/4. In terms of biological role, involved in the biosynthesis of branched-chain amino acids (BCAA). Catalyzes an alkyl-migration followed by a ketol-acid reduction of (S)-2-acetolactate (S2AL) to yield (R)-2,3-dihydroxy-isovalerate. In the isomerase reaction, S2AL is rearranged via a Mg-dependent methyl migration to produce 3-hydroxy-3-methyl-2-ketobutyrate (HMKB). In the reductase reaction, this 2-ketoacid undergoes a metal-dependent reduction by NADPH to yield (R)-2,3-dihydroxy-isovalerate. The polypeptide is Ketol-acid reductoisomerase (NADP(+)) (Parvibaculum lavamentivorans (strain DS-1 / DSM 13023 / NCIMB 13966)).